Here is a 227-residue protein sequence, read N- to C-terminus: Uracil-DNA glycosylase (227 aa).

Asp65 serves as the catalytic Proton acceptor.

This sequence belongs to the uracil-DNA glycosylase (UDG) superfamily. UNG family.

The protein localises to the cytoplasm. The catalysed reaction is Hydrolyzes single-stranded DNA or mismatched double-stranded DNA and polynucleotides, releasing free uracil.. Excises uracil residues from the DNA which can arise as a result of misincorporation of dUMP residues by DNA polymerase or due to deamination of cytosine. This chain is Uracil-DNA glycosylase, found in Lactobacillus delbrueckii subsp. bulgaricus (strain ATCC 11842 / DSM 20081 / BCRC 10696 / JCM 1002 / NBRC 13953 / NCIMB 11778 / NCTC 12712 / WDCM 00102 / Lb 14).